Reading from the N-terminus, the 110-residue chain is MRQVTIPLIQSKSMFCVIYRSSKRDQTYLYVEKKDDFSRVPEALMKGFGQPQLAMMLPLDGRKKLVNAELEKVKQALSEQGYYLQLPPPPEDLLKQHLSSVGQNTSHADR.

Positions 14 to 98 (MFCVIYRSSK…PPEDLLKQHL (85 aa)) constitute a YcgL domain. Residues 88–110 (PPPEDLLKQHLSSVGQNTSHADR) form a disordered region. The segment covering 97–110 (HLSSVGQNTSHADR) has biased composition (polar residues).

The protein is Protein YcgL of Salmonella schwarzengrund (strain CVM19633).